A 247-amino-acid chain; its full sequence is Aspartate/glutamate leucyltransferase (247 aa).

Belongs to the R-transferase family. Bpt subfamily.

The protein resides in the cytoplasm. It catalyses the reaction N-terminal L-glutamyl-[protein] + L-leucyl-tRNA(Leu) = N-terminal L-leucyl-L-glutamyl-[protein] + tRNA(Leu) + H(+). The enzyme catalyses N-terminal L-aspartyl-[protein] + L-leucyl-tRNA(Leu) = N-terminal L-leucyl-L-aspartyl-[protein] + tRNA(Leu) + H(+). Functionally, functions in the N-end rule pathway of protein degradation where it conjugates Leu from its aminoacyl-tRNA to the N-termini of proteins containing an N-terminal aspartate or glutamate. In Dechloromonas aromatica (strain RCB), this protein is Aspartate/glutamate leucyltransferase.